We begin with the raw amino-acid sequence, 428 residues long: BTB/POZ domain-containing protein KCTD16 (428 aa).

Positions 25–98 constitute a BTB domain; sequence EVVELNVGGQ…LRDRQVVLPD (74 aa). Phosphotyrosine is present on Y112. 4 positions are modified to phosphoserine: S130, S137, S143, and S146.

As to quaternary structure, homopentamer; forms an open pentamer. In contrast to other BTB domain-containing proteins, does not interact with CUL3. Interacts as a tetramer with GABRB1 and GABRB2.

Its subcellular location is the presynaptic cell membrane. The protein resides in the postsynaptic cell membrane. Its function is as follows. Auxiliary subunit of GABA-B receptors that determine the pharmacology and kinetics of the receptor response. Increases agonist potency and markedly alter the G-protein signaling of the receptors by accelerating onset and promoting desensitization. In Homo sapiens (Human), this protein is BTB/POZ domain-containing protein KCTD16 (KCTD16).